The following is a 442-amino-acid chain: MKKVFIRTFGCQMNEYDSDKMLAVLAEEHGGIEQVTQADEADIILFNTCSVREKAQEKVFSDLGRVRPLKEKNPGLIIGVAGCVASQEGENIIKRAPYVDVVFGPQTLHRLPKMIVDKETSGLSQVDISFPEIEKFDHLPPARVEGGAAFVSIMEGCSKYCSFCVVPYTRGEEFSRPLNDVLTEIANLAQQGVKEINLLGQNVNAYRGEMDDGEICDFATLLRIVHEIPGIERMRFTTSHPREFTDSIIECYRDLPKLVSHLHLPIQSGSDRVLSAMKRGYTALEYKSIIRKLRAIRPDLCLSSDFIVGFPGETEREFEQTLKLVKDIAFDLSFVFIYSPRPGTPAANLPDDTPHEEKVRRLEALNEVIEAETARINQTMVGTVQRCLVEGISKKDPDQLQARTANNRVVNFTGTPDMINQMIDLEITEAYTFSLRGKVVEA.

The region spanning 2–120 is the MTTase N-terminal domain; it reads KKVFIRTFGC…LPKMIVDKET (119 aa). Cysteine 11, cysteine 49, cysteine 83, cysteine 157, cysteine 161, and cysteine 164 together coordinate [4Fe-4S] cluster. The region spanning 143 to 375 is the Radical SAM core domain; sequence RVEGGAAFVS…NEVIEAETAR (233 aa). The 64-residue stretch at 378–441 folds into the TRAM domain; that stretch reads QTMVGTVQRC…TFSLRGKVVE (64 aa).

The protein belongs to the methylthiotransferase family. MiaB subfamily. In terms of assembly, monomer. Requires [4Fe-4S] cluster as cofactor.

The protein resides in the cytoplasm. It catalyses the reaction N(6)-dimethylallyladenosine(37) in tRNA + (sulfur carrier)-SH + AH2 + 2 S-adenosyl-L-methionine = 2-methylsulfanyl-N(6)-dimethylallyladenosine(37) in tRNA + (sulfur carrier)-H + 5'-deoxyadenosine + L-methionine + A + S-adenosyl-L-homocysteine + 2 H(+). In terms of biological role, catalyzes the methylthiolation of N6-(dimethylallyl)adenosine (i(6)A), leading to the formation of 2-methylthio-N6-(dimethylallyl)adenosine (ms(2)i(6)A) at position 37 in tRNAs that read codons beginning with uridine. This is tRNA-2-methylthio-N(6)-dimethylallyladenosine synthase from Neisseria meningitidis serogroup B (strain ATCC BAA-335 / MC58).